The following is a 209-amino-acid chain: Ribosomal RNA large subunit methyltransferase E (209 aa).

S-adenosyl-L-methionine contacts are provided by G63, W65, D83, D99, and D124. The active-site Proton acceptor is the K164.

It belongs to the class I-like SAM-binding methyltransferase superfamily. RNA methyltransferase RlmE family.

Its subcellular location is the cytoplasm. The catalysed reaction is uridine(2552) in 23S rRNA + S-adenosyl-L-methionine = 2'-O-methyluridine(2552) in 23S rRNA + S-adenosyl-L-homocysteine + H(+). Functionally, specifically methylates the uridine in position 2552 of 23S rRNA at the 2'-O position of the ribose in the fully assembled 50S ribosomal subunit. This is Ribosomal RNA large subunit methyltransferase E from Pseudoalteromonas translucida (strain TAC 125).